The sequence spans 940 residues: Inter-alpha-trypsin inhibitor heavy chain H5 (940 aa).

The signal sequence occupies residues 1-16 (MLPLLGLCFALPLCAG). Positions 35 to 161 (IPRQVRLLQR…KAAFLLSYEE (127 aa)) constitute a VIT domain. N-linked (GlcNAc...) asparagine glycosylation is found at asparagine 97 and asparagine 127. Residues 207–227 (NSRQRGSGRGPDDSGPPPSTV) form a disordered region. 6 N-linked (GlcNAc...) asparagine glycosylation sites follow: asparagine 231, asparagine 421, asparagine 508, asparagine 694, asparagine 778, and asparagine 795. Residues 295–478 (NVVFVLDSSA…AQLIGFYDEI (184 aa)) enclose the VWFA domain.

It belongs to the ITIH family.

Its subcellular location is the secreted. May act as a tumor suppressor. In Bos taurus (Bovine), this protein is Inter-alpha-trypsin inhibitor heavy chain H5 (ITIH5).